The chain runs to 353 residues: 3-deoxy-D-manno-octulosonic acid transferase (353 aa).

Glu31 serves as the catalytic Proton acceptor. CMP is bound by residues 211–212 (PR), 247–249 (FGI), and 273–276 (NLLE).

It belongs to the glycosyltransferase group 1 family. Glycosyltransferase 30 subfamily. As to quaternary structure, can form homodimer, homotrimer and homotetramer.

The protein resides in the cell inner membrane. The enzyme catalyses lipid IVA (E. coli) + CMP-3-deoxy-beta-D-manno-octulosonate = alpha-Kdo-(2-&gt;6)-lipid IVA (E. coli) + CMP + H(+). It functions in the pathway bacterial outer membrane biogenesis; LPS core biosynthesis. In terms of biological role, involved in lipopolysaccharide (LPS) biosynthesis. Catalyzes the transfer of a single 3-deoxy-D-manno-octulosonate (Kdo) residue from CMP-Kdo to lipid IV(A), the tetraacyldisaccharide-1,4'-bisphosphate precursor of lipid A. Is strictly monofunctional, i.e. is capable of adding only a single Kdo residue to the acceptor lipid. This is 3-deoxy-D-manno-octulosonic acid transferase (kdtA) from Aquifex aeolicus (strain VF5).